The primary structure comprises 232 residues: Dysfunctional anti-sigma-K factor RskA (232 aa).

The Cytoplasmic portion of the chain corresponds to 1–90; the sequence is MTEHTDFELL…EVRRQSRWRT (90 aa). Residues 91–111 form a helical membrane-spanning segment; it reads AAFASAAAIAVGLGAFDLGVL. Residues 112 to 232 are Extracellular-facing; sequence TRPSPPPTVA…GTILAELPLG (121 aa).

This sequence belongs to the anti-sigma-K factor family.

The protein localises to the cell membrane. In terms of biological role, an anti-sigma factor for extracytoplasmic function (ECF) sigma factor SigK. ECF sigma factors are held in an inactive form by an anti-sigma factor until released by regulated intramembrane proteolysis (RIP). However, in M.bovis this protein is probably dysfunctional, due to at least 1 of the 2 naturally occurring polymorphisms in its gene, when compared to M.tuberculosis. This leads to an increased expression of SigK-regulated genes, such as mpb70 and mpb83. RIP occurs when an extracytoplasmic signal triggers a concerted proteolytic cascade to transmit information and elicit cellular responses. The membrane-spanning regulatory substrate protein is first cut extracytoplasmically (site-1 protease, S1P), then within the membrane itself (site-2 protease, S2P, Rip1), while cytoplasmic proteases finish degrading the regulatory protein, liberating the sigma factor. The chain is Dysfunctional anti-sigma-K factor RskA (rskA) from Mycobacterium bovis (strain ATCC BAA-935 / AF2122/97).